We begin with the raw amino-acid sequence, 235 residues long: Leucyl/phenylalanyl-tRNA--protein transferase (235 aa).

This sequence belongs to the L/F-transferase family.

The protein resides in the cytoplasm. It catalyses the reaction N-terminal L-lysyl-[protein] + L-leucyl-tRNA(Leu) = N-terminal L-leucyl-L-lysyl-[protein] + tRNA(Leu) + H(+). The enzyme catalyses N-terminal L-arginyl-[protein] + L-leucyl-tRNA(Leu) = N-terminal L-leucyl-L-arginyl-[protein] + tRNA(Leu) + H(+). The catalysed reaction is L-phenylalanyl-tRNA(Phe) + an N-terminal L-alpha-aminoacyl-[protein] = an N-terminal L-phenylalanyl-L-alpha-aminoacyl-[protein] + tRNA(Phe). Functions in the N-end rule pathway of protein degradation where it conjugates Leu, Phe and, less efficiently, Met from aminoacyl-tRNAs to the N-termini of proteins containing an N-terminal arginine or lysine. This is Leucyl/phenylalanyl-tRNA--protein transferase from Anaeromyxobacter sp. (strain Fw109-5).